The sequence spans 758 residues: Probable ubiquitin carboxyl-terminal hydrolase creB (758 aa).

Positions 1 to 27 are disordered; the sequence is MGSFLRSFRRDVGSSTPSVGATPAKKE. The USP domain maps to 57–468; the sequence is FGMENYGNTC…CAYVLFYQET (412 aa). The Nucleophile role is filled by Cys-66. Disordered stretches follow at residues 116–148 and 243–268; these read AEAQAEKQRLANAQRPGAPPAQPPKPEDKDSSE and QPIPSLPPADTTDSSRQSISSGSKTP. A compositionally biased stretch (polar residues) spans 253-268; sequence TTDSSRQSISSGSKTP. Residue His-419 is the Proton acceptor of the active site. The interval 514 to 744 is disordered; that stretch reads IPVQDEPQRH…KGDRAGHGKW (231 aa). Positions 554-563 are enriched in pro residues; the sequence is ATPPPVPPIP. Positions 573–631 form a coiled coil; sequence KKSDIQSKKERAKEEKERKAAEKEMEKQRRKEQEARVKENQRREEAELKAALEASKASK. Basic and acidic residues-rich tracts occupy residues 573 to 650 and 729 to 740; these read KKSD…DPKR and DALKSPKGDRAG.

It belongs to the peptidase C19 family. In terms of assembly, interacts with creA, creC and qutD.

It catalyses the reaction Thiol-dependent hydrolysis of ester, thioester, amide, peptide and isopeptide bonds formed by the C-terminal Gly of ubiquitin (a 76-residue protein attached to proteins as an intracellular targeting signal).. Ubiquitin thioesterase component of the regulatory network controlling carbon source utilization through ubiquitination and deubiquitination involving creA, creB, creC, creD and acrB. Deubiquitinates the creA catabolic repressor and the quinate permease qutD. Also plays a role in response to carbon starvation and the control of extracellular proteases activity. This chain is Probable ubiquitin carboxyl-terminal hydrolase creB (creB), found in Aspergillus niger (strain ATCC MYA-4892 / CBS 513.88 / FGSC A1513).